A 368-amino-acid polypeptide reads, in one-letter code: MTVLIVEDDDITREAMGQYLKLSGFNVIEAENGEKAVELSENVDVALVDVMLPGMSGIEVVNKIKAKNPSCVVFVVTAYDDTEIVKKCVEAGADDFIKKPVNLELLRLKITHALRNRVFHMYRNSYLKSLKKKLFLLEKTAEEFFTEYEDFLFEVLEILNMLSEYRDMETHRHTERVGWLSGRIAEEMGMSEVFVTEIQFAAPLHDIGKIGIPDRILLKPGILTPEEFEIMKQHTTIGFRILSRSNSPILQLGAEIALTHHERWDGSGYPRGLKEREIPISGLIVAVADSFDAMVSRRPYKNPKPLEEAFREIESLSGKLYSPEVVEAFLKLEKEITDVYRREKDEDTSHNGGRSHQSSPGEGVEGIR.

Residues 2–114 (TVLIVEDDDI…LLRLKITHAL (113 aa)) form the Response regulatory domain. Aspartate 49 carries the post-translational modification 4-aspartylphosphate. The HD-GYP domain occupies 148–345 (YEDFLFEVLE…ITDVYRREKD (198 aa)). A divalent metal cation is bound by residues glutamate 169, histidine 173, histidine 205, aspartate 206, histidine 234, histidine 260, histidine 261, and aspartate 289. A disordered region spans residues 341 to 368 (RREKDEDTSHNGGRSHQSSPGEGVEGIR). Positions 350 to 360 (HNGGRSHQSSP) are enriched in polar residues.

The catalysed reaction is 3',3'-c-di-GMP + 2 H2O = 2 GMP + 2 H(+). Its activity is regulated as follows. Can function in vivo with either divalent iron or manganese occupying di- and trimetal sites. Dimetal is necessary and sufficient to catalyze conversion of c-di-GMP to pGpG, but conversion of pGpG to GMP requires an occupied trimetal site. Functionally, phosphodiesterase (PDE) that catalyzes the hydrolysis of cyclic diguanylate (c-di-GMP) to GMP. Hydrolyzes c-di-GMP to GMP in a two-step reaction, via the linear intermediate 5'-phosphoguanylyl(3'-&gt;5')guanosine (pGpG). This Thermotoga maritima (strain ATCC 43589 / DSM 3109 / JCM 10099 / NBRC 100826 / MSB8) protein is Cyclic di-GMP phosphodiesterase TM_0186.